Consider the following 273-residue polypeptide: Chondrolectin (273 aa).

Positions 1–21 are cleaved as a signal peptide; the sequence is MIRIASLLLGAALLCAQGAFA. The Extracellular portion of the chain corresponds to 22–216; it reads RRVVSGQKVC…VVTEAGIIPN (195 aa). Positions 35–179 constitute a C-type lectin domain; that stretch reads VKHPCYKMAY…CNMKHNYICK (145 aa). Disulfide bonds link C61–C178 and C144–C170. N-linked (GlcNAc...) asparagine glycosylation occurs at N86. The helical transmembrane segment at 217–237 threads the bilayer; sequence LIYVIIPTIPLLLLILVALGT. The Cytoplasmic portion of the chain corresponds to 238-273; sequence CCFQMLHKSKGRSKTSPNQSTLWISKSTRKESGMEV. Residues 247–273 are disordered; sequence KGRSKTSPNQSTLWISKSTRKESGMEV. The segment covering 251 to 263 has biased composition (polar residues); sequence KTSPNQSTLWISK.

In terms of assembly, interacts with RABGGTB. As to expression, in adult mice preferentially expressed in skeletal muscle, testis, brain, and lung. Expressed in striated muscle (at protein level). Expressed in spinal cord. Detected in spinal cord fast motor neurons (at protein level).

Its subcellular location is the membrane. In terms of biological role, may play a role in the development of the nervous system such as in neurite outgrowth and elongation. May be involved in motor axon growth and guidance. In Mus musculus (Mouse), this protein is Chondrolectin (Chodl).